Here is a 404-residue protein sequence, read N- to C-terminus: Queuine tRNA-ribosyltransferase catalytic subunit (404 aa).

Catalysis depends on aspartate 98, which acts as the Proton acceptor. Substrate-binding positions include 98–102, aspartate 152, glutamine 195, and glycine 222; that span reads DSGGF. Residues 253–259 are RNA binding; the sequence is GVGYAED. The Nucleophile role is filled by aspartate 272. An RNA binding; important for wobble base 34 recognition region spans residues 277–281; it reads TRTAR. The Zn(2+) site is built by cysteine 310, cysteine 312, cysteine 315, and histidine 347.

The protein belongs to the queuine tRNA-ribosyltransferase family. In terms of assembly, heterodimer of a catalytic subunit and an accessory subunit. Zn(2+) serves as cofactor.

It is found in the cytoplasm. The protein resides in the nucleus. It catalyses the reaction guanosine(34) in tRNA + queuine = queuosine(34) in tRNA + guanine. In terms of biological role, catalytic subunit of the queuine tRNA-ribosyltransferase (TGT) that catalyzes the base-exchange of a guanine (G) residue with queuine (Q) at position 34 (anticodon wobble position) in tRNAs with GU(N) anticodons (tRNA-Asp, -Asn, -His and -Tyr), resulting in the hypermodified nucleoside queuosine (7-(((4,5-cis-dihydroxy-2-cyclopenten-1-yl)amino)methyl)-7-deazaguanosine). Catalysis occurs through a double-displacement mechanism. The nucleophile active site attacks the C1' of nucleotide 34 to detach the guanine base from the RNA, forming a covalent enzyme-RNA intermediate. The proton acceptor active site deprotonates the incoming queuine, allowing a nucleophilic attack on the C1' of the ribose to form the product. In Schizosaccharomyces pombe (strain 972 / ATCC 24843) (Fission yeast), this protein is Queuine tRNA-ribosyltransferase catalytic subunit.